The primary structure comprises 707 residues: Leucine-rich repeat neuronal protein 3 (707 aa).

Positions methionine 1 to alanine 22 are cleaved as a signal peptide. Residues isoleucine 23 to alanine 69 enclose the LRRNT domain. Topologically, residues isoleucine 23–threonine 626 are extracellular. LRR repeat units follow at residues aspartate 70–proline 91, asparagine 93–lysine 114, glutamine 117–glycine 138, asparagine 141–glycine 162, asparagine 165–alanine 186, asparagine 189–proline 210, lysine 213–glycine 234, asparagine 237–lysine 258, asparagine 261–asparagine 282, histidine 285–alanine 304, aspartate 310–arginine 332, and lysine 335–proline 358. N-linked (GlcNAc...) asparagine glycosylation is found at asparagine 93 and asparagine 103. A glycan (N-linked (GlcNAc...) asparagine) is linked at asparagine 223. Residues asparagine 368 to proline 421 form the LRRCT domain. Asparagine 382 carries an N-linked (GlcNAc...) asparagine glycan. Residues proline 421–glycine 514 form the Ig-like C2-type domain. A disulfide bond links cysteine 444 and cysteine 496. 4 N-linked (GlcNAc...) asparagine glycosylation sites follow: asparagine 522, asparagine 579, asparagine 608, and asparagine 624. Residues glycine 523–leucine 614 form the Fibronectin type-III domain. Residues valine 627–cysteine 647 form a helical membrane-spanning segment. Over valine 648 to serine 707 the chain is Cytoplasmic.

Expressed in the brain, in Stronger expression in the ventricular zone and anlage of thalamus, spinal cord, and dorsal root ganglion in 11-17 dpc cerebellum and cerebral cortex in adults.

It is found in the membrane. The sequence is that of Leucine-rich repeat neuronal protein 3 (Lrrn3) from Mus musculus (Mouse).